An 81-amino-acid polypeptide reads, in one-letter code: MKTLLLTLVVVTIVCLDLGYTRKCNKLVPLFYKTCPAGKNLCYKMFMVSNLTVPVKRGCIDVCPKSSLLVKYVCCNTDRCN.

The signal sequence occupies residues Met-1–Thr-21. 4 disulfide bridges follow: Cys-24–Cys-42, Cys-35–Cys-59, Cys-63–Cys-74, and Cys-75–Cys-80.

Belongs to the three-finger toxin family. Short-chain subfamily. Type IA cytotoxin sub-subfamily. As to quaternary structure, monomer in solution; Homodimer and oligomer in the presence of negatively charged lipids forming a pore with a size ranging between 20 and 30 Angstroms. As to expression, expressed by the venom gland.

It localises to the secreted. Its subcellular location is the target cell membrane. Functionally, shows cytolytic activity on many different cells by forming pore in lipid membranes. In vivo, increases heart rate or kills the animal by cardiac arrest. In addition, it binds to heparin with high affinity, interacts with Kv channel-interacting protein 1 (KCNIP1) in a calcium-independent manner, and binds to integrin alpha-V/beta-3 (ITGAV/ITGB3) with moderate affinity. This chain is Cytotoxin 4N, found in Naja atra (Chinese cobra).